The following is a 191-amino-acid chain: Protein GrpE (191 aa).

It belongs to the GrpE family. Homodimer.

The protein localises to the cytoplasm. Participates actively in the response to hyperosmotic and heat shock by preventing the aggregation of stress-denatured proteins, in association with DnaK and GrpE. It is the nucleotide exchange factor for DnaK and may function as a thermosensor. Unfolded proteins bind initially to DnaJ; upon interaction with the DnaJ-bound protein, DnaK hydrolyzes its bound ATP, resulting in the formation of a stable complex. GrpE releases ADP from DnaK; ATP binding to DnaK triggers the release of the substrate protein, thus completing the reaction cycle. Several rounds of ATP-dependent interactions between DnaJ, DnaK and GrpE are required for fully efficient folding. This is Protein GrpE from Listeria monocytogenes serotype 1/2a (strain 10403S).